The following is a 98-amino-acid chain: Histone H4-1 (98 aa).

The segment covering 1–14 has biased composition (gly residues); that stretch reads MGGKGGKGGKGLGK. The disordered stretch occupies residues 1 to 20; that stretch reads MGGKGGKGGKGLGKVGAKKR.

Belongs to the histone H4 family. In terms of assembly, the nucleosome is a histone octamer containing two molecules each of H2A, H2B, H3 and H4 assembled in one H3-H4 heterotetramer and two H2A-H2B heterodimers. The octamer wraps approximately 147 bp of DNA.

The protein resides in the nucleus. The protein localises to the chromosome. Its function is as follows. Core component of nucleosome. Nucleosomes wrap and compact DNA into chromatin, limiting DNA accessibility to the cellular machineries which require DNA as a template. Histones thereby play a central role in transcription regulation, DNA repair, DNA replication and chromosomal stability. DNA accessibility is regulated via a complex set of post-translational modifications of histones, also called histone code, and nucleosome remodeling. This Blepharisma japonicum protein is Histone H4-1.